Reading from the N-terminus, the 35-residue chain is Peptide ToHyp2 (35 aa).

The span at 1 to 29 (LPKPPLLPPPVPGLAPGLPPLPVPDPVPH) shows a compositional bias: pro residues. Residues 1-35 (LPKPPLLPPPVPGLAPGLPPLPVPDPVPHPPKKPP) form a disordered region. 8 positions are modified to hydroxyproline: Pro5, Pro9, Pro10, Pro12, Pro16, Pro20, Pro31, and Pro35.

In terms of processing, O-glycosylated; contains pentose side chains at some or all of the hydroxyproline residues. Glycosylation is required for full antifungal activity.

Functionally, antimicrobial peptide. Inhibits elongation of hyphae in B.sorokiniana (IC(50)=3.8 uM) but has no effect on this process or on germination of conidia in a panel of other phytopathogenic fungi. At concentrations above 10 uM, has antibacterial activity. This chain is Peptide ToHyp2, found in Taraxacum officinale (Common dandelion).